The following is a 154-amino-acid chain: 3-hydroxyacyl-[acyl-carrier-protein] dehydratase FabZ (154 aa).

The active site involves histidine 60.

Belongs to the thioester dehydratase family. FabZ subfamily.

The protein localises to the cytoplasm. The enzyme catalyses a (3R)-hydroxyacyl-[ACP] = a (2E)-enoyl-[ACP] + H2O. Functionally, involved in unsaturated fatty acids biosynthesis. Catalyzes the dehydration of short chain beta-hydroxyacyl-ACPs and long chain saturated and unsaturated beta-hydroxyacyl-ACPs. In Actinobacillus pleuropneumoniae serotype 5b (strain L20), this protein is 3-hydroxyacyl-[acyl-carrier-protein] dehydratase FabZ.